The following is a 275-amino-acid chain: COP9 signalosome complex subunit 7a (275 aa).

An N-acetylserine modification is found at serine 2. In terms of domain architecture, PCI spans 2–159 (SAEVKVTGQN…QRLEVDYSIG (158 aa)). The stretch at 185 to 233 (LSGIEEQVSRANQHKEQQLGLKQQIESEVANLKKTIKVTTAAAAAATSQ) forms a coiled coil. Residues 228 to 275 (AAATSQDPEQHLTELREPASGTNQRQPSKKASKGKGLRGSAKIWSKSN) form a disordered region. Basic and acidic residues predominate over residues 235 to 244 (PEQHLTELRE). A compositionally biased stretch (basic residues) spans 254–263 (PSKKASKGKG).

Belongs to the CSN7/EIF3M family. CSN7 subfamily. Component of the CSN complex, composed of COPS1/GPS1, COPS2, COPS3, COPS4, COPS5, COPS6, COPS7 (COPS7A or COPS7B), COPS8 and COPS9. In the complex, it probably interacts directly with COPS1, COPS2, COPS4, COPS5, COPS6 and COPS8. Interacts with PMF1. Interacts with the translation initiation factor EIF3S6. Interacts with CK2 and PKD. Interacts directly with ID3. Phosphorylated by CK2 and PKD kinases.

The protein resides in the cytoplasm. Its subcellular location is the nucleus. In terms of biological role, component of the COP9 signalosome complex (CSN), a complex involved in various cellular and developmental processes. The CSN complex is an essential regulator of the ubiquitin (Ubl) conjugation pathway by mediating the deneddylation of the cullin subunits of SCF-type E3 ligase complexes, leading to decrease the Ubl ligase activity of SCF-type complexes such as SCF, CSA or DDB2. The complex is also involved in phosphorylation of p53/TP53, JUN, I-kappa-B-alpha/NFKBIA, ITPK1 and IRF8/ICSBP, possibly via its association with CK2 and PKD kinases. CSN-dependent phosphorylation of TP53 and JUN promotes and protects degradation by the Ubl system, respectively. The protein is COP9 signalosome complex subunit 7a (Cops7a) of Mus musculus (Mouse).